The chain runs to 1189 residues: Structural maintenance of chromosomes protein 2 (1189 aa).

32-39 (GLNGSGKS) is a binding site for ATP. Residues 211-503 (KEARASYLEY…ELCESIEAKH (293 aa)) adopt a coiled-coil conformation. In terms of domain architecture, SMC hinge spans 522–639 (VKGLVVTLIT…CSSMDNAKKV (118 aa)). The stretch at 674–1030 (ILSKLKTMRD…ELDRKKNKAL (357 aa)) forms a coiled coil. Composition is skewed to basic and acidic residues over residues 782-792 (NAEAERGKEIK) and 803-814 (KKADDSSRKMKE). 2 disordered regions span residues 782–814 (NAEA…KMKE) and 867–886 (SLKN…EERT).

It belongs to the SMC family. SMC2 subfamily. As to quaternary structure, forms a heterodimer with SMC4. Component of the condensin complex, which contains the SMC2 and SMC4 heterodimer, and probably some non SMC subunits that regulate the complex.

The protein localises to the nucleus. It localises to the cytoplasm. The protein resides in the chromosome. In terms of biological role, central component of the condensin complex, a complex required for conversion of interphase chromatin into mitotic-like condense chromosomes. The condensin complex probably introduces positive supercoils into relaxed DNA in the presence of type I topoisomerases and converts nicked DNA into positive knotted forms in the presence of type II topoisomerases. The sequence is that of Structural maintenance of chromosomes protein 2 (SMC2) from Gallus gallus (Chicken).